A 72-amino-acid chain; its full sequence is Translation initiation factor IF-1 (72 aa).

The region spanning 1-72 is the S1-like domain; sequence MSKEDVIEVE…TRGRITWRAK (72 aa).

This sequence belongs to the IF-1 family. As to quaternary structure, component of the 30S ribosomal translation pre-initiation complex which assembles on the 30S ribosome in the order IF-2 and IF-3, IF-1 and N-formylmethionyl-tRNA(fMet); mRNA recruitment can occur at any time during PIC assembly.

Its subcellular location is the cytoplasm. Its function is as follows. One of the essential components for the initiation of protein synthesis. Stabilizes the binding of IF-2 and IF-3 on the 30S subunit to which N-formylmethionyl-tRNA(fMet) subsequently binds. Helps modulate mRNA selection, yielding the 30S pre-initiation complex (PIC). Upon addition of the 50S ribosomal subunit IF-1, IF-2 and IF-3 are released leaving the mature 70S translation initiation complex. This is Translation initiation factor IF-1 from Acetivibrio thermocellus (strain ATCC 27405 / DSM 1237 / JCM 9322 / NBRC 103400 / NCIMB 10682 / NRRL B-4536 / VPI 7372) (Clostridium thermocellum).